The primary structure comprises 1193 residues: Falcilysin (1193 aa).

H129 lines the Zn(2+) pocket. The active-site Proton acceptor is the E132. 2 residues coordinate Zn(2+): H133 and E243. The disordered stretch occupies residues 376–404; the sequence is DKTNNHNNNHSNNQSSENNGYSNGSHSSD. A compositionally biased stretch (low complexity) spans 380 to 394; it reads NHNNNHSNNQSSENN. The segment covering 395–404 has biased composition (polar residues); it reads GYSNGSHSSD. Residues 583-619 are a coiled coil; that stretch reads LLEGDENYAQEQENLEKQELKKRIENFNEQEKEQVIK.

This sequence belongs to the peptidase M16 family. In terms of assembly, monomer. Component of the hemozoin formation complex (HFC) composed of falcipains FP2A and/or FP2B, plasmepsins PMII, PMIII/HAP and PMIV, heme detoxifying protein HDP and falcilysin FLN. The HFC complex is involved in hemoglobin degradation and detoxification of heme in the food vacuole during the asexual blood stage. Requires Zn(2+) as cofactor. Does not require processing for targeting to the food vacuole or maturation.

The protein resides in the vacuole membrane. Its subcellular location is the plastid. It localises to the apicoplast. It is found in the vesicle. Its function is as follows. In the food vacuole, acts downstream of proteases plasmepsins PMI and PMII and falcipains during the catabolism of host hemoglobin by cleaving peptide fragments of alpha and beta hemoglobin subunits generated by PMI and PMII and falcipains. In the apicoplast, degrades apicoplast transit peptides after their cleavage. Prefers bulky hydrophobic amino acids in the P1' position at both acidic and neutral pH. At P2', prefers hydrophobic residues at acidic pH; at neutral pH, these same residues are abundant but prefers Arg. At P3', prefers hydrophobic residues, especially Met, at both pH conditions. At P4' and P5', prefers acidic residues at acidic pH, however, at neutral pH, the enzyme is less selective at these positions. The optimal site cleavage at acidic pH is YNEHS-|-FFMEE and, at neutral pH, MKRHS-|-FRMRG. This chain is Falcilysin, found in Plasmodium falciparum (isolate 3D7).